Here is a 130-residue protein sequence, read N- to C-terminus: Protein ApaG (130 aa).

The ApaG domain occupies 3–127; sequence KAETRGIMVT…FSLDSPHLRR (125 aa).

The chain is Protein ApaG from Methylorubrum extorquens (strain CM4 / NCIMB 13688) (Methylobacterium extorquens).